The sequence spans 728 residues: FAD-dependent monooxygenase avaB (728 aa).

Residues V17–K37 form a helical membrane-spanning segment. Residues N50–Q64 are compositionally biased toward polar residues. Residues N50–T72 form a disordered region. Residue V168 coordinates FAD. Position 490-491 (D490–L491) interacts with NADP(+).

This sequence belongs to the FAD-binding monooxygenase family. FAD serves as cofactor.

Its subcellular location is the membrane. Its pathway is secondary metabolite metabolism. Functionally, multifunctional FAD-dependent monooxygenase; part of the cluster that mediates the biosynthesis of a highly modified cyclo-arginine-tryptophan dipeptide (cRW). Within the pathway, avaB uses the avaA cyclo-arginine-tryptophan dipeptide (cRW) as substrate to generate the cyclo-Arg-formylkynurenine diketopiperazine (DKP). AvaB also catalyzes an additional N-oxidation of the avaC product which is followed by cyclization and dehydration. The first step of the pathway is perfornmed by the arginine-containing cyclodipeptide synthase (RCPDS) avaA that acts as the scaffold-generating enzyme and is responsible for formation of the cyclo-Arg-Trp (cRW) diketopiperazine. AvaB then acts as a multifunctional flavoenzyme that is responsible for generating the cyclo-Arg-formylkynurenine DKP, which can be deformylated by avaC. AvaB then further catalyzes an additional N-oxidation followed by cyclization and dehydration. The next step is an N-acetylation of the guanidine group catalyzed by the arginine N-acetyltransferase avaD. The roles of the additional enzymes identified within the ava cluster still have to be determined. The sequence is that of FAD-dependent monooxygenase avaB from Aspergillus versicolor.